The chain runs to 179 residues: Large ribosomal subunit protein uL6 (179 aa).

It belongs to the universal ribosomal protein uL6 family. Part of the 50S ribosomal subunit.

In terms of biological role, this protein binds to the 23S rRNA, and is important in its secondary structure. It is located near the subunit interface in the base of the L7/L12 stalk, and near the tRNA binding site of the peptidyltransferase center. In Mycobacterium ulcerans (strain Agy99), this protein is Large ribosomal subunit protein uL6.